The chain runs to 966 residues: Valine--tRNA ligase (966 aa).

The 'HIGH' region motif lies at 48-58; the sequence is PNITGGLHLGH. Residues 348–368 are a coiled coil; that stretch reads DYKDARKKIIEECKRLKILED. The 'KMSKS' region motif lies at 566–570; sequence KMSKS. ATP is bound at residue Lys-569. Residues 939 to 960 adopt a coiled-coil conformation; it reads FKKSQEKLNHYNKTKNKLLNQY.

The protein belongs to the class-I aminoacyl-tRNA synthetase family. ValS type 1 subfamily. In terms of assembly, monomer.

It is found in the cytoplasm. The enzyme catalyses tRNA(Val) + L-valine + ATP = L-valyl-tRNA(Val) + AMP + diphosphate. Functionally, catalyzes the attachment of valine to tRNA(Val). As ValRS can inadvertently accommodate and process structurally similar amino acids such as threonine, to avoid such errors, it has a 'posttransfer' editing activity that hydrolyzes mischarged Thr-tRNA(Val) in a tRNA-dependent manner. This is Valine--tRNA ligase from Blochmanniella floridana.